Reading from the N-terminus, the 794-residue chain is MEDVAELELQTTEPHAFFHASGVGERHLNGNEIIVEIQETVFVADGDGNMAVQGFGPDEGDSVVIQDVIEDVVIEDVQCSDILDGGRVSEAVIIPEQVLEDEVGTGEEEQVLEEDSLTSCDVPDNVLDPELVDGELTIPDPETGMHSVSGHVVIGEEITDDALEEDMISEEVLVADCVSEAVIDANGIPVHENDSEEVNCDDYLMISLDDAEKIDEDGAEEITMGSVVEGDSSKLDGSCPEVIKVYIFKADPGEEDLGGTVDIVESESENDHGDGFLDSHNGGRLPREKMVYMTVNDSQNDDDLDVAEIADEVYMEVIVGEEDAAVAHEHQLEDAELSKTFMPVAWAAAYGNNTDGIEHRNGTASALLHIDESDGLDRLTKQKLKKKRRGENRQYQTAIIIGPDGHPLTVYPCMICGKKFKSRGFLKRHMKNHPEHLVRKKYRCTDCDYTTNKKVSLHNHLESHKLTATVIKTEKDLECEECGKIFLHANALFAHKLTHNEKAGNKMHICKFCDYETAEQGLLNRHLLAVHSKSFPHICVECGKGFRHPSELKKHMRTHTGEKPYLCQYCDYRSADSSNLKTHVKTKHSKEMPFKCDICLQTFTDSKDLQEHAILHQESKNHQCLHCDHKSSNSSDLKRHIISVHTKDYPHKCEVCEKGFHRPSELKKHEAAHKGKKMHQCRHCEFHIADPFVLSRHILSVHTKELPYRCKRCKKGFRQQIELKKHMKTHSGKKVYQCEYCEYNTTDASGFKRHVISIHTKDYPHRCDYCKKGFRRPSEKNQHTLKHHKEASLM.

The Nuclear localization signal motif lies at 380–389; the sequence is TKQKLKKKRR. C2H2-type zinc fingers lie at residues 411 to 433, 442 to 464, 477 to 499, 508 to 531, 537 to 559, 565 to 588, 594 to 616, 622 to 645, 651 to 673, 679 to 702, 708 to 730, 736 to 759, and 765 to 788; these read YPCM…MKNH, YRCT…LESH, LECE…KLTH, HICK…LAVH, HICV…MRTH, YLCQ…KTKH, FKCD…AILH, HQCL…ISVH, HKCE…EAAH, HQCR…LSVH, YRCK…MKTH, YQCE…ISIH, and HRCD…LKHH.

The protein belongs to the krueppel C2H2-type zinc-finger protein family. ZFX/ZFY subfamily.

It localises to the nucleus. Probable transcriptional activator. The chain is Zinc finger Y-chromosomal protein 1 (zfy1) from Xenopus laevis (African clawed frog).